The primary structure comprises 155 residues: Protein Smg homolog (155 aa).

The protein belongs to the Smg family.

In Methylococcus capsulatus (strain ATCC 33009 / NCIMB 11132 / Bath), this protein is Protein Smg homolog.